Reading from the N-terminus, the 260-residue chain is Protein FAM220A (260 aa).

2 disordered regions span residues 1–75 (MKAG…SKAS) and 129–158 (GSDW…GRPG). Polar residues predominate over residues 35–47 (RNPSPSVVPSWTD).

In terms of assembly, interacts with transcriptional activator STAT3; the interaction occurs in both the nucleus and the cytoplasm, is enhanced by IL6 and promotes STAT3 dephosphorylation, leading to negative regulation of STAT3 transcriptional activator activity. Can interact with both unphosphorylated and phosphorylated STAT3 but interacts preferentially with phosphorylated STAT3 in the nucleus. Interacts with protein phosphatase PTPN2/TC45; this promotes interaction of PTPN2 with STAT3, leading to dephosphorylation of STAT3 by PTPN2. Expressed at high levels in the testis where it is detected within elongated spermatids during the late stages (steps 9-16) of haploid germ cell development and in the tubular lumen (at protein level).

The protein resides in the nucleus. Its subcellular location is the cytoplasm. The protein localises to the cytoplasmic vesicle. It is found in the secretory vesicle. It localises to the acrosome. In terms of biological role, promotes dephosphorylation of transcriptional activator STAT3 by interacting with both STAT3 and protein phosphatase PTPN2. This promotes interaction of PTPN2 with STAT3 and mediates STAT3 dephosphorylation by PTPN2, leading to negative regulation of STAT3 transcriptional activator activity. May be required for spermiogenesis or sperm function. The polypeptide is Protein FAM220A (Mus musculus (Mouse)).